The following is a 1357-amino-acid chain: DNA-directed RNA polymerase subunit beta (1357 aa).

This sequence belongs to the RNA polymerase beta chain family. In terms of assembly, the RNAP catalytic core consists of 2 alpha, 1 beta, 1 beta' and 1 omega subunit. When a sigma factor is associated with the core the holoenzyme is formed, which can initiate transcription.

The enzyme catalyses RNA(n) + a ribonucleoside 5'-triphosphate = RNA(n+1) + diphosphate. In terms of biological role, DNA-dependent RNA polymerase catalyzes the transcription of DNA into RNA using the four ribonucleoside triphosphates as substrates. The chain is DNA-directed RNA polymerase subunit beta from Pseudomonas syringae pv. syringae (strain B728a).